We begin with the raw amino-acid sequence, 57 residues long: uncharacterized protein (57 aa).

A helical transmembrane segment spans residues 24 to 44 (LWVTLLLTMFFTAVEIIGGLI).

To cation A.eutrophus efflux system protein CzcD.

Its subcellular location is the cell membrane. This is an uncharacterized protein from Bacillus caldolyticus.